Reading from the N-terminus, the 123-residue chain is Putative C-type lectin protein FPV003/FPV258 (123 aa).

Positions 21-122 (CRGPYTSYNN…CNATYGFVCI (102 aa)) constitute a C-type lectin domain.

The polypeptide is Putative C-type lectin protein FPV003/FPV258 (Fowlpox virus (strain NVSL) (FPV)).